We begin with the raw amino-acid sequence, 371 residues long: Otolith matrix protein 1 (371 aa).

The first 21 residues, 1–21 (MDLPGGHLAVVLFLFVLVSMS), serve as a signal peptide directing secretion. The 341-residue stretch at 27–367 (IRWCTVSDAE…YTTILRAFEC (341 aa)) folds into the Transferrin-like domain.

In terms of assembly, interacts with OTOL1.

The protein resides in the secreted. Its function is as follows. Required for normal otolith growth and deposition of otolin-1 in the otolith. This is Otolith matrix protein 1 (otomp) from Danio rerio (Zebrafish).